Consider the following 440-residue polypeptide: tRNA-2-methylthio-N(6)-dimethylallyladenosine synthase (440 aa).

In terms of domain architecture, MTTase N-terminal spans 5 to 121 (KLLYLETFGC…LPELVRAAEK (117 aa)). [4Fe-4S] cluster contacts are provided by Cys14, Cys50, Cys84, Cys159, Cys163, and Cys166. Residues 145–375 (RTDGVSRFVT…LDLQRRITLE (231 aa)) form the Radical SAM core domain. In terms of domain architecture, TRAM spans 378–440 (KSFVGTVQQV…QNSLQGELCR (63 aa)).

This sequence belongs to the methylthiotransferase family. MiaB subfamily. Monomer. [4Fe-4S] cluster is required as a cofactor.

The protein resides in the cytoplasm. The enzyme catalyses N(6)-dimethylallyladenosine(37) in tRNA + (sulfur carrier)-SH + AH2 + 2 S-adenosyl-L-methionine = 2-methylsulfanyl-N(6)-dimethylallyladenosine(37) in tRNA + (sulfur carrier)-H + 5'-deoxyadenosine + L-methionine + A + S-adenosyl-L-homocysteine + 2 H(+). Functionally, catalyzes the methylthiolation of N6-(dimethylallyl)adenosine (i(6)A), leading to the formation of 2-methylthio-N6-(dimethylallyl)adenosine (ms(2)i(6)A) at position 37 in tRNAs that read codons beginning with uridine. This Geotalea uraniireducens (strain Rf4) (Geobacter uraniireducens) protein is tRNA-2-methylthio-N(6)-dimethylallyladenosine synthase.